A 276-amino-acid polypeptide reads, in one-letter code: Large ribosomal subunit protein uL2 (276 aa).

Disordered regions lie at residues 1-20 and 219-276; these read MGIKKYNPTTNGRRNMTTND and TVRG…RRKK. Residues 7 to 20 show a composition bias toward polar residues; it reads NPTTNGRRNMTTND.

The protein belongs to the universal ribosomal protein uL2 family. As to quaternary structure, part of the 50S ribosomal subunit. Forms a bridge to the 30S subunit in the 70S ribosome.

Functionally, one of the primary rRNA binding proteins. Required for association of the 30S and 50S subunits to form the 70S ribosome, for tRNA binding and peptide bond formation. It has been suggested to have peptidyltransferase activity; this is somewhat controversial. Makes several contacts with the 16S rRNA in the 70S ribosome. The chain is Large ribosomal subunit protein uL2 from Bacillus cereus (strain Q1).